A 470-amino-acid polypeptide reads, in one-letter code: Probable citrate synthase, mitochondrial (470 aa).

Residues His-297, His-351, and Asp-406 contribute to the active site.

This sequence belongs to the citrate synthase family. Homodimer.

It is found in the mitochondrion matrix. It carries out the reaction oxaloacetate + acetyl-CoA + H2O = citrate + CoA + H(+). The protein operates within carbohydrate metabolism; tricarboxylic acid cycle; isocitrate from oxaloacetate: step 1/2. The protein is Probable citrate synthase, mitochondrial of Leishmania braziliensis.